A 567-amino-acid polypeptide reads, in one-letter code: Multidrug and toxin extrusion protein 1 (567 aa).

Met1 carries the post-translational modification N-acetylmethionine. Topologically, residues 1–37 (MERTEESAPGPGGADAASERRGLRCLLLPGFLEELRA) are cytoplasmic. A Phosphoserine modification is found at Ser18. The helical transmembrane segment at 38-58 (LLVLAGPAFLAQLMMFLISFI) threads the bilayer. Residues 59-72 (SSVFCGHLGKLELD) are Extracellular-facing. Residues 73 to 93 (AVTLAIAVINVTGISVGHGLS) traverse the membrane as a helical segment. Over 94–120 (SACDTLISQTYGSQNLKHVGVILQRGT) the chain is Cytoplasmic. Residues 121–141 (LILLLCCFPCWALFINTEQIL) form a helical membrane-spanning segment. At 142 to 152 (LLFRQDPDVSR) the chain is on the extracellular side. The chain crosses the membrane as a helical span at residues 153–173 (LTQTYVMIFIPALPAAFLYTL). Over 174–187 (QVKYLLNQGIVLPQ) the chain is Cytoplasmic. The helical transmembrane segment at 188–208 (IMTGIAANLVNALANYVFLYH) threads the bilayer. Residues 209–216 (LHLGVMGS) lie on the Extracellular side of the membrane. A helical transmembrane segment spans residues 217–237 (ALANTISQFALAIFLFLYILW). The Cytoplasmic segment spans residues 238–257 (RRLHQATWGGWSWECLQDWA). Residues 258 to 277 (SFLRLAIPSMLMLCIEWWAY) traverse the membrane as a helical segment. The Extracellular portion of the chain corresponds to 278 to 295 (EVGSFLSGILGMVELGAQ). The helical transmembrane segment at 296–316 (SITYELAIIVYMIPSGFSVAA) threads the bilayer. Topologically, residues 317–336 (NVRVGNALGAGNIDQAKKSS) are cytoplasmic. A helical transmembrane segment spans residues 337–357 (AISLIVTELFAVTFCVLLLGC). Topologically, residues 358–370 (KDLVGYIFTTDRD) are extracellular. A helical transmembrane segment spans residues 371 to 391 (IVALVAQVIPIYAVSHLFEGL). Residues 392–408 (ACTCGGILRGTGNQKVG) lie on the Cytoplasmic side of the membrane. The chain crosses the membrane as a helical span at residues 409–429 (AIVNAIGYYVIGLPIGIALMF). Topologically, residues 430 to 437 (AAKLGVIG) are extracellular. The helical transmembrane segment at 438-458 (LWSGIIICTTCQTTCFLAFIA) threads the bilayer. The Cytoplasmic portion of the chain corresponds to 459 to 543 (RLNWKRACQQ…LSGKQLALRR (85 aa)). A helical transmembrane segment spans residues 544 to 564 (GLLLLGVVLVLVGGILVRVYI). The Extracellular portion of the chain corresponds to 565 to 567 (RIE).

This sequence belongs to the multi antimicrobial extrusion (MATE) (TC 2.A.66.1) family. As to expression, predominantly expressed in kidney and liver. Also expressed in various cells, including brain glia-like cells and capillaries, pancreatic duct cells, urinary bladder epithelium, adrenal gland cortex, heart, stomach, small intestine, thyroid gland, testes, alpha cells of the islets of Langerhans, Leydig cells, and vitamin A-storing Ito cells. Expressed in heart, stomach, small intestine, bladder, thyroid gland, adrenal gland and testes (at protein level).

It is found in the cell membrane. The protein resides in the apical cell membrane. It catalyses the reaction thiamine(out) + H(+)(in) = thiamine(in) + H(+)(out). The enzyme catalyses estrone 3-sulfate(in) + H(+)(out) = estrone 3-sulfate(out) + H(+)(in). It carries out the reaction creatinine(in) + H(+)(out) = creatinine(out) + H(+)(in). The catalysed reaction is agmatine(in) + H(+)(out) = agmatine(out) + H(+)(in). In terms of biological role, multidrug efflux pump that functions as a H(+)/organic cation antiporter. Plays a physiological role in the excretion of cationic compounds including endogenous metabolites, drugs, toxins through the kidney and liver, into urine and bile respectively. Mediates the efflux of endogenous compounds such as creatinine, vitamin B1/thiamine, agmatine and estrone-3-sulfate. May also contribute to regulate the transport of cationic compounds in testis across the blood-testis-barrier. This is Multidrug and toxin extrusion protein 1 (Slc47a1) from Mus musculus (Mouse).